A 215-amino-acid polypeptide reads, in one-letter code: MOB kinase activator-like 1A (215 aa).

Residues 1 to 27 (MSLFGLGRNQKTFRPKKSAPSGSKGAQ) are disordered. Zn(2+) is bound by residues Cys-79, Cys-84, His-161, and His-166.

Belongs to the MOB1/phocein family. Interacts with SIK1 at the plasma membrane and in the nucleus. In terms of tissue distribution, constitutively expressed. In 3- to 4-day-old seedlings, expression is high in the shoot apical meristem and along the vasculature in cotyledons, hypocotyls and roots. At the root tip, expression is detected in columella and lateral root cap cells as well as in the stem cell niche around the quiescent center (QC). The levels of expression decrease progressively in the meristematic zone from the root tip towards the base of the root, becoming stronger again in the elongation zone. In flowers, expression appears localized in ovules and pollen.

The protein resides in the nucleus. It is found in the cell membrane. The protein localises to the vacuole membrane. Plays a key role in regulation of cell expansion and cell division. Required for proper plant development, the correct patterning of the root meristem and the control of root growth. Involved in both sporogenesis and gametogenesis. This is MOB kinase activator-like 1A from Arabidopsis thaliana (Mouse-ear cress).